The following is a 610-amino-acid chain: uncharacterized protein (610 aa).

A compositionally biased stretch (polar residues) spans 1 to 28 (MDSPSTSESPLKKNTIQDFGESNMTESP). Residues 1–36 (MDSPSTSESPLKKNTIQDFGESNMTESPQSKEEIDE) form a disordered region. The RING-type zinc finger occupies 41-82 (CSVCKNEIIDTTSLSDCCHEFCYDCIVGWLTKGSGPFCPMCK). 2 disordered regions span residues 390–411 (YRGQ…FRPA) and 431–515 (TSSA…SADR). Residues 432–447 (SSAGAGSARSRGSDSV) are compositionally biased toward low complexity. Composition is skewed to acidic residues over residues 448 to 470 (VEID…EDSD) and 478 to 487 (SEEDSDEEIQ).

This is an uncharacterized protein from Caenorhabditis elegans.